A 170-amino-acid polypeptide reads, in one-letter code: Protein SprT (170 aa).

The 144-residue stretch at 22–165 (LQLANQHLGT…RQCGEKLQFI (144 aa)) folds into the SprT-like domain. H78 serves as a coordination point for Zn(2+). E79 is a catalytic residue. H82 contacts Zn(2+).

Belongs to the SprT family. It depends on Zn(2+) as a cofactor.

The protein localises to the cytoplasm. This is Protein SprT from Yersinia pseudotuberculosis serotype IB (strain PB1/+).